The sequence spans 64 residues: Large ribosomal subunit protein bL35 (64 aa).

The protein belongs to the bacterial ribosomal protein bL35 family.

The polypeptide is Large ribosomal subunit protein bL35 (Vibrio vulnificus (strain CMCP6)).